A 556-amino-acid chain; its full sequence is Urocanate hydratase (556 aa).

NAD(+) is bound by residues 52–53, Gln130, 176–178, Glu196, Arg201, 243–244, 264–268, 274–275, and Tyr323; these read GG, GMG, NA, QTSAH, and YL. Cys411 is an active-site residue. NAD(+) is bound at residue Gly493.

The protein belongs to the urocanase family. Requires NAD(+) as cofactor.

The protein localises to the cytoplasm. The enzyme catalyses 4-imidazolone-5-propanoate = trans-urocanate + H2O. It functions in the pathway amino-acid degradation; L-histidine degradation into L-glutamate; N-formimidoyl-L-glutamate from L-histidine: step 2/3. In terms of biological role, catalyzes the conversion of urocanate to 4-imidazolone-5-propionate. This Rhodospirillum rubrum (strain ATCC 11170 / ATH 1.1.1 / DSM 467 / LMG 4362 / NCIMB 8255 / S1) protein is Urocanate hydratase.